The following is a 1312-amino-acid chain: AT-rich interactive domain-containing protein 4B (1312 aa).

Disordered regions lie at residues 124 to 166 (PLTN…EDDR) and 266 to 306 (KTEL…EPFP). Phosphoserine is present on residues serine 276, serine 295, and serine 296. Residues 277-305 (EAEEEEEEEDDEKEKEDNSSEEEEEIEPF) are compositionally biased toward acidic residues. The ARID domain occupies 306–398 (PEERENFLQQ…YLYGFEEYCR (93 aa)). Residues lysine 429, lysine 440, and lysine 462 each participate in a glycyl lysine isopeptide (Lys-Gly) (interchain with G-Cter in SUMO2) cross-link. Disordered stretches follow at residues 458-577 (EIER…KVQV), 635-680 (IKHR…EMVS), 708-894 (QASE…TTGF), 909-1212 (LNNS…NRLP), and 1252-1288 (SEVASIDRRRKRLKKKERESAATSSSSSSPSSSSITA). The tract at residues 465–473 (IKPSLGSKK) is antigenic epitope. The residue at position 483 (serine 483) is a Phosphoserine. Over residues 483–496 (SDQEKEVNIKKPED) the composition is skewed to basic and acidic residues. Lysine 517 participates in a covalent cross-link: Glycyl lysine isopeptide (Lys-Gly) (interchain with G-Cter in SUMO2). Positions 532 to 567 (NKEEDEDDEEAEEEEEEEEEEEDEDDDDNNEEEEFE) are enriched in acidic residues. In terms of domain architecture, Tudor-knot spans 572-624 (GMKVQVRYGRGKNQKMYEASIKDSDVEGGEVLYLVHYCGWNVRYDEWIKADKI). The span at 643–656 (NKLDKEKDKDEKYS) shows a compositional bias: basic and acidic residues. Phosphoserine is present on residues serine 666, serine 675, and serine 717. 2 stretches are compositionally biased toward basic and acidic residues: residues 722–754 (ERGAQDMDNNGKEESKIDHLTNNRNDLISKEEQ) and 778–787 (SPERLRKDIE). Residues 728 to 754 (MDNNGKEESKIDHLTNNRNDLISKEEQ) are a coiled coil. Lysine 751 participates in a covalent cross-link: Glycyl lysine isopeptide (Lys-Gly) (interchain with G-Cter in SUMO2). 2 positions are modified to phosphoserine: serine 778 and serine 790. The span at 788–799 (VLSEDTDYEEDE) shows a compositional bias: acidic residues. Position 793 is a phosphothreonine (threonine 793). Composition is skewed to basic and acidic residues over residues 807 to 816 (VKKDTTDKSS), 828 to 852 (CNTEECLKTGSPGKKEEKAKNKESL), 909 to 927 (LNNSDERLQNSRAKDRKDV), and 995 to 1010 (KPIEEKTVEVNDRKAE). Serine 1014 is modified (phosphoserine). Residue threonine 1026 is modified to Phosphothreonine. Residues 1028–1037 (ESPSSVTVTE) are compositionally biased toward low complexity. Serine 1029 bears the Phosphoserine mark. Residues 1038–1047 (GSRQQSSVTV) show a composition bias toward polar residues. Positions 1056–1065 (EEVRSIKSET) are enriched in basic and acidic residues. A compositionally biased stretch (low complexity) spans 1087–1101 (SSPAGFDASVSSSSS). Residues 1130-1137 (KKQKRSHK) form an antigenic epitope region. Positions 1130 to 1148 (KKQKRSHKATVVNNKKKGK) are enriched in basic residues. Threonine 1150 is modified (phosphothreonine). A phosphoserine mark is found at serine 1152, serine 1153, serine 1155, and serine 1159. The segment covering 1162–1191 (ESITKSQPVKSVSTGMKSHSTKSPARTQSP) has biased composition (polar residues). Basic and acidic residues predominate over residues 1196–1208 (KNGDKDPDLKEPS). The stretch at 1231-1270 (ERITILQEKLQEIRKHYLSLKSEVASIDRRRKRLKKKERE) forms a coiled coil. A compositionally biased stretch (low complexity) spans 1272–1288 (AATSSSSSSPSSSSITA).

Component of a Sin3A corepressor complex consisting of SIN3A, SAP130, SUDS3/SAP45, SAP180, HDAC1 and HDAC2. Interacts with ARID4A. Interacts with AR. In terms of tissue distribution, highly expressed in the testis and in breast, lung, colon, pancreatic and ovarian cancers. Expressed at low levels in the thymus, prostate and ovary.

Its subcellular location is the nucleus. The protein localises to the cytoplasm. Functionally, acts as a transcriptional repressor. May function in the assembly and/or enzymatic activity of the Sin3A corepressor complex or in mediating interactions between the complex and other regulatory complexes. Plays a role in the regulation of epigenetic modifications at the PWS/AS imprinting center near the SNRPN promoter, where it might function as part of a complex with RB1 and ARID4A. Involved in spermatogenesis, together with ARID4A, where it functions as a transcriptional coactivator for AR (androgen receptor) and enhances expression of genes required for sperm maturation. Regulates expression of the tight junction protein CLDN3 in the testis, which is important for integrity of the blood-testis barrier. Plays a role in myeloid homeostasis where it regulates the histone methylation state of bone marrow cells and expression of various genes involved in hematopoiesis. May function as a leukemia suppressor. The chain is AT-rich interactive domain-containing protein 4B (ARID4B) from Homo sapiens (Human).